A 725-amino-acid polypeptide reads, in one-letter code: Polyribonucleotide nucleotidyltransferase (725 aa).

Positions 487 and 493 each coordinate Mg(2+). Residues 554–613 (PRIETMQIPTDKIREVIGTGGKVIREIVEKTGAKIDIQDTGVVKIASSDGKAIKAAYNWI) form the KH domain. The region spanning 623-691 (GMIYDGTVVK…ERGKIRLSMK (69 aa)) is the S1 motif domain. The disordered stretch occupies residues 699 to 725 (EDLTEKLKAEREADRNRERQARQSAGE). Residues 701–719 (LTEKLKAEREADRNRERQA) show a composition bias toward basic and acidic residues.

The protein belongs to the polyribonucleotide nucleotidyltransferase family. Mg(2+) serves as cofactor.

The protein localises to the cytoplasm. It catalyses the reaction RNA(n+1) + phosphate = RNA(n) + a ribonucleoside 5'-diphosphate. In terms of biological role, involved in mRNA degradation. Catalyzes the phosphorolysis of single-stranded polyribonucleotides processively in the 3'- to 5'-direction. This Methylobacterium sp. (strain 4-46) protein is Polyribonucleotide nucleotidyltransferase.